We begin with the raw amino-acid sequence, 430 residues long: Trigger factor (430 aa).

Positions 157–242 (GDLVALETWS…AVEVSEPVLP (86 aa)) constitute a PPIase FKBP-type domain.

The protein belongs to the FKBP-type PPIase family. Tig subfamily.

The protein localises to the cytoplasm. The enzyme catalyses [protein]-peptidylproline (omega=180) = [protein]-peptidylproline (omega=0). Its function is as follows. Involved in protein export. Acts as a chaperone by maintaining the newly synthesized protein in an open conformation. Functions as a peptidyl-prolyl cis-trans isomerase. This Xanthomonas euvesicatoria pv. vesicatoria (strain 85-10) (Xanthomonas campestris pv. vesicatoria) protein is Trigger factor.